A 467-amino-acid polypeptide reads, in one-letter code: Methylenetetrahydrofolate--tRNA-(uracil-5-)-methyltransferase TrmFO (467 aa).

11-16 (GAGLAG) contacts FAD.

This sequence belongs to the MnmG family. TrmFO subfamily. Requires FAD as cofactor.

The protein resides in the cytoplasm. It catalyses the reaction uridine(54) in tRNA + (6R)-5,10-methylene-5,6,7,8-tetrahydrofolate + NADH + H(+) = 5-methyluridine(54) in tRNA + (6S)-5,6,7,8-tetrahydrofolate + NAD(+). The enzyme catalyses uridine(54) in tRNA + (6R)-5,10-methylene-5,6,7,8-tetrahydrofolate + NADPH + H(+) = 5-methyluridine(54) in tRNA + (6S)-5,6,7,8-tetrahydrofolate + NADP(+). Functionally, catalyzes the folate-dependent formation of 5-methyl-uridine at position 54 (M-5-U54) in all tRNAs. The polypeptide is Methylenetetrahydrofolate--tRNA-(uracil-5-)-methyltransferase TrmFO (Prochlorococcus marinus (strain MIT 9303)).